Consider the following 1446-residue polypeptide: MADDLFDFIETEGNFSQLLAAAAAAEEEGIASGPDGGSQGSRRRGSSGEDLLFGPGGLFSDDAAEAEAAVLAAAAGATRPPRPPSAQQQQQPRRGSGEIVVLDDEDEEEDEPGSPAAGSPGRALHQGSEHGHLVLGPRSRAGSGPRPPTPAALAAAEAGAPGGPGRSSPSAASPASSSGSPGPSAAPRRWSPARGDPVGEPGPAARPRTPAPPAQPAAVAAAPARRGPASPASPAAGPVSAPGGGGAPSAGGDRGRHHHQHREPLLDEPAAARRLDPRPLGARSPVSSNPNSNSNSTTTVAVETVARGPEKDEDGLGLAGDGGAPPQRQPRRRRAGEGALRRGRGFSSSSSSGSDSDLSPARSPSAPRAPAAAARRSASSSSSSSSSSSSSSSSSSSEGEEDEGVRPGAPLARAGPPPSPPAPAAAPRPSASSASSSAAASPAPAPEPARPPRRKRRSTNNHLSLMADGPPPTDGPLLTPLGEPWPGSDPPADGRVRYGGAGDSREGLWDEDDVRQAAARYRAAAGPVPVFIPEMGDSRKQHEALVRLIYSGAAGEAMSWLQNPRMQAPDQRFNQFCQRRVHAPHGHGSFITGSVTPPLPHIGDAMAAQDPLWALPHAVSAVAMSRRYDRTQKTFILQSLRRAYADMAYPGRAADPRAGEATVEALCARVRAAFAAAQPGRVPRELADACVLACRGVLERLLPCPLRLPAPARAPAALGPACLEEVTAALLALRDAIPGAGPAERRQAADSVALVARTVAPLVRYSVDGARAREAAWTYAAALFAPANVAAARLAEAAARPGPAEPAPGLPPLWPEQPGLVVPAPAPAAAGAPSGLPGSGPSSPASTKSSSSTKSSSSTKSGLSGSSGYASSPAAGPDPAPERRKKKRRAPGARRPGDGEEDEGLSGAALRGDGHGHRDDEEDRGPRRKRRSLGLGPAPDPAPALLSSSSSSSEDDRLRRPLGPMPEHPAPDGGFRRVPAGETHTPRPSEAALAAYCPPEVARALVDQEVFPELWRPALTFDPAALAHIAARRGAPLRRRAAWMRQIADPEDVRVVVLYDPLPHEELCAEPAEGAPRPAWDPRRGGLSALLAAFAHRLCTPDSHAWAGNWTGRPDIGRLNAQGVLLLSARDLGFAGAVEYLCSRLGAARRRLIVLDTIEDWPADGPAVGDYHVYVRVRLDPAAQCAVRWPGCRELRAAVLDSSSIVGPACFARVEASFARLHPGAEPLRLCRQDNVRYTVSTRAGPRTPVPLPPRAYRQRVLPTVDGCKDMARQRSALGLGDPDFDAGAAFGHRAANRWGLGAPLRPVFVSCGRRGLAELRGPEGLPAELRAFCAAALLEPDAEAAPLVLTPGAVAAAGAPPAVLWDFAPFETSVRAAAGGAVETHRPAGASGAGAGPGEDGDSVEIVGVRGGDGRPRGPLGPIKVEAISDDEEAEDAGNPYLLLR.

Disordered regions lie at residues 25 to 59 (AEEEGIASGPDGGSQGSRRRGSSGEDLLFGPGGLF), 73 to 493 (AAAG…PPAD), 801 to 987 (PGPA…HTPR), and 1385 to 1446 (THRP…LLLR). Positions 73 to 94 (AAAGATRPPRPPSAQQQQQPRR) are enriched in low complexity. A compositionally biased stretch (acidic residues) spans 101–112 (VLDDEDEEEDEP). 2 stretches are compositionally biased toward low complexity: residues 166–189 (RSSPSAASPASSSGSPGPSAAPRR) and 216–241 (PAAVAAAPARRGPASPASPAAGPVSA). Basic and acidic residues predominate over residues 262–277 (REPLLDEPAAARRLDP). 2 stretches are compositionally biased toward low complexity: residues 284-306 (SPVSSNPNSNSNSTTTVAVETVA) and 345-397 (GFSS…SSSS). The span at 415–426 (GPPPSPPAPAAA) shows a compositional bias: pro residues. Positions 427–442 (PRPSASSASSSAAASP) are enriched in low complexity. Pro residues predominate over residues 803–815 (PAEPAPGLPPLWP). A compositionally biased stretch (low complexity) spans 827-877 (PAAAGAPSGLPGSGPSSPASTKSSSSTKSSSSTKSGLSGSSGYASSPAAGP). The span at 883–892 (RRKKKRRAPG) shows a compositional bias: basic residues. Residues 933 to 952 (LGLGPAPDPAPALLSSSSSS) show a composition bias toward low complexity.

This sequence belongs to the herpesviridae ICP4 family. A long stretch of serine residues may be a major site of phosphorylation.

It is found in the host nucleus. Its function is as follows. This IE protein is a multifunctional protein capable of migrating to the nucleus, binding to DNA, trans-activating other viral genes, and autoregulating its own synthesis. The sequence is that of Major viral transcription factor ICP4 homolog (IE) from Suid herpesvirus 1 (strain Kaplan) (SuHV-1).